We begin with the raw amino-acid sequence, 190 residues long: Acyl-acyl carrier protein thioesterase ATL3, chloroplastic (190 aa).

Residues 1 to 49 (MFLQVTGTATPAMPAVVFLNSWRRPLSIPLRSVKTFKPLAFFDLKGGKG) constitute a chloroplast transit peptide. Asp-66 is a catalytic residue.

Belongs to the 4-hydroxybenzoyl-CoA thioesterase family. As to expression, highly expressed in stems and flowers and at lower levels in rosette leaves, cauline leaves and siliques.

The protein localises to the plastid. It is found in the chloroplast. Functionally, acyl-ACP thioesterase involved in the production of fatty acids and beta-keto fatty acids. Can produce fatty acids of long chain (14:1 and 16:1) and beta-keto fatty acids of medium to long chain (8:0, 10:0, 12:0, 12:1, 14:0 and 16:0) when expressed in a heterologous organism (E.coli). Possesses thioesterase activity for lauroyl-ACP (12:0-ACP) in vitro. May play a role in the generation of long fatty acids in the chloroplast. The polypeptide is Acyl-acyl carrier protein thioesterase ATL3, chloroplastic (Arabidopsis thaliana (Mouse-ear cress)).